Consider the following 339-residue polypeptide: MDRLLQFRFESAPGWQSNVALFLLSIGGLFTACKLFSFCRALLSIFVLPGQKLSKFGPKGSWALVTGASDGIGKEYSLQLARAGYNILLVSRTTSKLAAVADEIKSKSPTVQTKVFAMDFFKNNDGDYENLKLLIQDLDISILVNNVGRSHSIPTPFVLTPLEELENIIMINCTGTLRITQLVAPGMMQRKRGLILTMASFAGMIPTPLLATYCGSKAFLQYWSIALGAELQPYGVQVELVQSHLVTSAMSKIRRPTVTVPIPRDLVRAVLSKIGRGSGLSAYAYTSVPYWSHGLMAYALTQVLGHMGKFVLGYNKALHESIRKRALRKAEREKNKKST.

A helical transmembrane segment spans residues 19 to 39; sequence VALFLLSIGGLFTACKLFSFC. The NADP(+) site is built by leucine 64, lysine 105, aspartate 119, aspartate 127, asparagine 146, tyrosine 213, lysine 217, valine 246, and serine 248. Tyrosine 213 serves as the catalytic Proton donor. The active-site Lowers pKa of active site Tyr is the lysine 217.

Belongs to the short-chain dehydrogenases/reductases (SDR) family.

The protein resides in the endoplasmic reticulum membrane. The catalysed reaction is a very-long-chain (3R)-3-hydroxyacyl-CoA + NADP(+) = a very-long-chain 3-oxoacyl-CoA + NADPH + H(+). Its pathway is lipid metabolism; fatty acid biosynthesis. Component of the microsomal membrane bound fatty acid elongation system, which produces the 26-carbon very long-chain fatty acids (VLCFA) from palmitate. Catalyzes the reduction of the 3-ketoacyl-CoA intermediate that is formed in each cycle of fatty acid elongation. VLCFAs serve as precursors for ceramide and sphingolipids. The protein is Very-long-chain 3-oxoacyl-CoA reductase of Ajellomyces capsulatus (strain NAm1 / WU24) (Darling's disease fungus).